Consider the following 315-residue polypeptide: Glutamyl-Q tRNA(Asp) synthetase (315 aa).

L-glutamate is bound by residues 12 to 16 (RFAPS) and E48. The 'HIGH' region signature appears at 15-25 (PSPSGPLHFGS). Zn(2+) contacts are provided by C104, C106, Y124, and C128. L-glutamate-binding residues include Y181 and R199. The short motif at 237 to 241 (KLSKQ) is the 'KMSKS' region element. Residue K240 participates in ATP binding.

The protein belongs to the class-I aminoacyl-tRNA synthetase family. GluQ subfamily. The cofactor is Zn(2+).

Its function is as follows. Catalyzes the tRNA-independent activation of glutamate in presence of ATP and the subsequent transfer of glutamate onto a tRNA(Asp). Glutamate is transferred on the 2-amino-5-(4,5-dihydroxy-2-cyclopenten-1-yl) moiety of the queuosine in the wobble position of the QUC anticodon. The sequence is that of Glutamyl-Q tRNA(Asp) synthetase from Aromatoleum aromaticum (strain DSM 19018 / LMG 30748 / EbN1) (Azoarcus sp. (strain EbN1)).